We begin with the raw amino-acid sequence, 232 residues long: Ribonuclease 3 (232 aa).

The region spanning 10–135 (ALKIYEATGY…LIGAMYMDGG (126 aa)) is the RNase III domain. Glu48 lines the Mg(2+) pocket. Asp52 is an active-site residue. Mg(2+) is bound by residues Asn121 and Glu124. Glu124 is an active-site residue. One can recognise a DRBM domain in the interval 161–230 (DPKTALQEWV…AKLMLKKITE (70 aa)).

It belongs to the ribonuclease III family. Homodimer. Requires Mg(2+) as cofactor.

The protein localises to the cytoplasm. The catalysed reaction is Endonucleolytic cleavage to 5'-phosphomonoester.. Digests double-stranded RNA. Involved in the processing of primary rRNA transcript to yield the immediate precursors to the large and small rRNAs (23S and 16S). Processes some mRNAs, and tRNAs when they are encoded in the rRNA operon. Processes pre-crRNA and tracrRNA of type II CRISPR loci if present in the organism. This Anaplasma marginale (strain St. Maries) protein is Ribonuclease 3.